Reading from the N-terminus, the 407-residue chain is Venom metalloproteinase 3 (407 aa).

N-linked (GlcNAc...) asparagine glycans are attached at residues asparagine 42, asparagine 91, asparagine 126, and asparagine 166. The 215-residue stretch at 191–405 (FYPKLLVLVD…TSAACLKDTY (215 aa)) folds into the Peptidase M12B domain. 2 disulfides stabilise this stretch: cysteine 317-cysteine 400 and cysteine 356-cysteine 384. Residue histidine 340 coordinates Zn(2+). Residue glutamate 341 is part of the active site. The Zn(2+) site is built by histidine 344 and histidine 350. Asparagine 391 carries N-linked (GlcNAc...) asparagine glycosylation.

It in the C-terminal section; belongs to the venom metalloproteinase (M12B) family. Monomer. Requires Zn(2+) as cofactor. As to expression, expressed by the venom gland.

Its subcellular location is the secreted. With respect to regulation, the gelatinase activity is inhibited by EDTA. Its function is as follows. The recombinant protein has gelatinase activity. In vivo, injection of this recombinant into fifth instar L.oleracea (host) larvae results in partial insect mortality associated with the molt to sixth instar, with surviving insects showing retarded development and growth. This is Venom metalloproteinase 3 from Eulophus pennicornis (Parasitoid wasp).